The chain runs to 153 residues: Peptide deformylase (153 aa).

Fe cation-binding residues include C87 and H129. Residue E130 is part of the active site. Fe cation is bound at residue H133.

It belongs to the polypeptide deformylase family. Fe(2+) serves as cofactor.

The catalysed reaction is N-terminal N-formyl-L-methionyl-[peptide] + H2O = N-terminal L-methionyl-[peptide] + formate. Functionally, removes the formyl group from the N-terminal Met of newly synthesized proteins. Requires at least a dipeptide for an efficient rate of reaction. N-terminal L-methionine is a prerequisite for activity but the enzyme has broad specificity at other positions. This is Peptide deformylase from Dictyoglomus thermophilum (strain ATCC 35947 / DSM 3960 / H-6-12).